We begin with the raw amino-acid sequence, 119 residues long: Large ribosomal subunit protein bL20 (119 aa).

The protein belongs to the bacterial ribosomal protein bL20 family.

Its function is as follows. Binds directly to 23S ribosomal RNA and is necessary for the in vitro assembly process of the 50S ribosomal subunit. It is not involved in the protein synthesizing functions of that subunit. In Polaromonas sp. (strain JS666 / ATCC BAA-500), this protein is Large ribosomal subunit protein bL20.